A 66-amino-acid polypeptide reads, in one-letter code: Large ribosomal subunit protein bL32 (66 aa).

Basic residues predominate over residues 1–19 (MAIVPKRKTSKQRKHKRNT). Positions 1–21 (MAIVPKRKTSKQRKHKRNTHS) are disordered.

Belongs to the bacterial ribosomal protein bL32 family.

This chain is Large ribosomal subunit protein bL32, found in Mycoplasmopsis synoviae (strain 53) (Mycoplasma synoviae).